Here is a 306-residue protein sequence, read N- to C-terminus: Probable histidinol-phosphatase (306 aa).

The protein belongs to the PHP hydrolase family. HisK subfamily.

The catalysed reaction is L-histidinol phosphate + H2O = L-histidinol + phosphate. It participates in amino-acid biosynthesis; L-histidine biosynthesis; L-histidine from 5-phospho-alpha-D-ribose 1-diphosphate: step 8/9. This chain is Probable histidinol-phosphatase, found in Schizosaccharomyces pombe (strain 972 / ATCC 24843) (Fission yeast).